The sequence spans 1481 residues: Cystic fibrosis transmembrane conductance regulator (1481 aa).

Topologically, residues 1-77 (MQRSPLEKAS…KLINALRRCF (77 aa)) are cytoplasmic. A helical membrane pass occupies residues 78–98 (FWRFMFYGIILYLGEVTKAVQ). Residues 81 to 365 (FMFYGIILYL…WAVQTWYDSL (285 aa)) form the ABC transmembrane type-1 1 domain. Over 99–122 (PLLLGRIIASYDPDNEAERSIAIY) the chain is Extracellular. The helical transmembrane segment at 123–146 (LGIGLCLLFIVRTLLLHPAIFGLH) threads the bilayer. Residues 147-195 (HIGMQMRIAMFSLIYKKTLKLSSRVLDKISIGQLVSLLSNNLNKFDEGL) are Cytoplasmic-facing. Residues 196–216 (ALAHFVWIAPLQVTLLMGLLW) form a helical membrane-spanning segment. Residues 217–222 (DLLQAS) are Extracellular-facing. The chain crosses the membrane as a helical span at residues 223–243 (AFCGLAFLIVLALFQAGLGRM). Residues 244 to 298 (MMKYRDQRAGKINERLVITSEMIENIQSVKAYCWEEAMEKMIENLRQTELKLTRK) are Cytoplasmic-facing. Residues 299–319 (AAYVRYFNSSAFFFSGFFVVF) traverse the membrane as a helical segment. The Extracellular portion of the chain corresponds to 320–339 (LSVLPYALIKGIVLRRIFTT). The helical transmembrane segment at 340 to 358 (ISFCIVLRMAVTRQFPWAV) threads the bilayer. The Cytoplasmic portion of the chain corresponds to 359–858 (QTWYDSLGAI…YLRYITIHKS (500 aa)). ATP-binding positions include Trp401, Ser433, 457–464 (GSTGAGKT), and Gln492. The ABC transporter 1 domain occupies 422 to 645 (NGDNSLFFSN…RPDFSSKLMG (224 aa)). Residue Cys523 is the site of S-palmitoyl cysteine attachment. Residues Ser548 and Ser659 each carry the phosphoserine modification. Positions 653-831 (SAERRNSILT…EEINEDDLKE (179 aa)) are disordered R region. Ser669 bears the Phosphoserine; by PKA mark. At Ser685 the chain carries Phosphoserine. Lys687 is covalently cross-linked (Glycyl lysine isopeptide (Lys-Gly) (interchain with G-Cter in ubiquitin)). Phosphoserine occurs at positions 699 and 711. At Thr716 the chain carries Phosphothreonine. Phosphoserine occurs at positions 736, 767, 790, 795, and 813. A helical membrane pass occupies residues 859 to 879 (LIFVLIWCLVIFLAEVAASLV). The ABC transmembrane type-1 2 domain maps to 859-1155 (LIFVLIWCLV…AVNSSIDVDS (297 aa)). At 880 to 918 (VLWLLKETPPQDSGNSTKGANNSYAVIITSTSSYYVFYI) the chain is on the extracellular side. Asn894 and Asn900 each carry an N-linked (GlcNAc...) asparagine glycan. Residues 919–939 (YVGVADTLLALGLFRGLPLVH) traverse the membrane as a discontinuously helical segment. Residues 940 to 990 (TLITVSKILHHKMLHSVLQAPMSTLNTLKAGGILNRFSKDMAILDDLLPLT) lie on the Cytoplasmic side of the membrane. A helical transmembrane segment spans residues 991 to 1011 (IFDFIQLLLIVIGAVAVVSVL). The Extracellular segment spans residues 1012 to 1013 (QP). The chain crosses the membrane as a helical span at residues 1014 to 1034 (YIFLATVPVIAAFIILRAYFL). The Cytoplasmic portion of the chain corresponds to 1035–1095 (HTSQQLKQLE…TANWFLYLST (61 aa)). A helical membrane pass occupies residues 1096–1116 (LRWFQMRIEMIFVIFFIAVTF). Over 1117–1130 (ISILTTGEGEGTVG) the chain is Extracellular. Residues 1131 to 1151 (IILTLAMNIMSTLQWAVNSSI) form a helical membrane-spanning segment. Topologically, residues 1152 to 1481 (DVDSLMRSVS…TEEEVQETRL (330 aa)) are cytoplasmic. The ABC transporter 2 domain occupies 1211 to 1444 (MTVKDLTAKY…KSLFQQAISS (234 aa)). ATP is bound by residues Tyr1220 and 1245-1252 (GRTGSGKS). An interaction with GORASP2 region spans residues 1387-1481 (RTLKQAFADC…TEEEVQETRL (95 aa)). Cys1396 carries the S-palmitoyl cysteine lipid modification. Phosphoserine is present on residues Ser1445 and Ser1457. The segment at 1449 to 1481 (KLFPHRNSSKHKSRSKIAALQEETEEEVQETRL) is disordered. Residues 1451–1463 (FPHRNSSKHKSRS) are compositionally biased toward basic residues. The span at 1470–1481 (EETEEEVQETRL) shows a compositional bias: acidic residues. Positions 1479–1481 (TRL) match the PDZ-binding motif.

Belongs to the ABC transporter superfamily. ABCC family. CFTR transporter (TC 3.A.1.202) subfamily. In terms of assembly, monomer; does not require oligomerization for channel activity. May form oligomers in the membrane. Interacts with SLC26A3, SLC26A6 and NHERF1. Interacts with SHANK2. Interacts with MYO6. Interacts (via C-terminus) with GOPC (via PDZ domain); this promotes CFTR internalization and thereby decreases channel activity. Interacts with SLC4A7 through NHERF1. Found in a complex with MYO5B and RAB11A. Interacts with ANO1. Interacts with SLC26A8. Interacts with AHCYL1; the interaction increases CFTR activity. Interacts with CSE1L. The core-glycosylated form interacts with GORASP2 (via PDZ GRASP-type 1 domain) in respone to ER stress. Interacts with MARCHF2; the interaction leads to CFTR ubiqtuitination and degradation. Interacts with ADGRG2. In terms of processing, N-glycosylated. Post-translationally, phosphorylated; cAMP treatment promotes phosphorylation and activates the channel. Dephosphorylation decreases the ATPase activity (in vitro). Phosphorylation at PKA sites activates the channel. Phosphorylation at PKC sites enhances the response to phosphorylation by PKA. Phosphorylated by AMPK; this inhibits channel activity. Ubiquitinated, leading to its degradation in the lysosome. Deubiquitination by USP10 in early endosomes enhances its endocytic recycling to the cell membrane. Ubiquitinated by RNF185 during ER stress. Ubiquitinated by MARCHF2.

The protein resides in the apical cell membrane. It is found in the early endosome membrane. The protein localises to the cell membrane. Its subcellular location is the recycling endosome membrane. It localises to the endoplasmic reticulum membrane. The protein resides in the nucleus. It catalyses the reaction ATP + H2O + closed Cl(-) channel = ADP + phosphate + open Cl(-) channel.. The enzyme catalyses chloride(in) = chloride(out). It carries out the reaction hydrogencarbonate(in) = hydrogencarbonate(out). The catalysed reaction is ATP + H2O = ADP + phosphate + H(+). Epithelial ion channel that plays an important role in the regulation of epithelial ion and water transport and fluid homeostasis. Mediates the transport of chloride ions across the cell membrane. Possesses an intrinsic ATPase activity and utilizes ATP to gate its channel; the passive flow of anions through the channel is gated by cycles of ATP binding and hydrolysis by the ATP-binding domains. The ion channel is also permeable to HCO(3)(-); selectivity depends on the extracellular chloride concentration. Exerts its function also by modulating the activity of other ion channels and transporters. Contributes to the regulation of the pH and the ion content of the epithelial fluid layer. Modulates the activity of the epithelial sodium channel (ENaC) complex, in part by regulating the cell surface expression of the ENaC complex. May regulate bicarbonate secretion and salvage in epithelial cells by regulating the transporter SLC4A7. Can inhibit the chloride channel activity of ANO1. Plays a role in the chloride and bicarbonate homeostasis during sperm epididymal maturation and capacitation. This is Cystic fibrosis transmembrane conductance regulator from Equus caballus (Horse).